Consider the following 609-residue polypeptide: Glutamine--fructose-6-phosphate aminotransferase [isomerizing] (609 aa).

Residue Cys2 is the Nucleophile; for GATase activity of the active site. One can recognise a Glutamine amidotransferase type-2 domain in the interval Cys2 to Arg218. 2 SIS domains span residues Ala286–Leu426 and Leu458–Pro599. Catalysis depends on Lys604, which acts as the For Fru-6P isomerization activity.

In terms of assembly, homodimer.

It localises to the cytoplasm. It carries out the reaction D-fructose 6-phosphate + L-glutamine = D-glucosamine 6-phosphate + L-glutamate. Functionally, catalyzes the first step in hexosamine metabolism, converting fructose-6P into glucosamine-6P using glutamine as a nitrogen source. The protein is Glutamine--fructose-6-phosphate aminotransferase [isomerizing] of Escherichia coli O157:H7.